The primary structure comprises 248 residues: Ubiquinone/menaquinone biosynthesis C-methyltransferase UbiE (248 aa).

Positions 68 and 92 each coordinate S-adenosyl-L-methionine.

It belongs to the class I-like SAM-binding methyltransferase superfamily. MenG/UbiE family.

It catalyses the reaction a 2-demethylmenaquinol + S-adenosyl-L-methionine = a menaquinol + S-adenosyl-L-homocysteine + H(+). The catalysed reaction is a 2-methoxy-6-(all-trans-polyprenyl)benzene-1,4-diol + S-adenosyl-L-methionine = a 5-methoxy-2-methyl-3-(all-trans-polyprenyl)benzene-1,4-diol + S-adenosyl-L-homocysteine + H(+). Its pathway is quinol/quinone metabolism; menaquinone biosynthesis; menaquinol from 1,4-dihydroxy-2-naphthoate: step 2/2. It functions in the pathway cofactor biosynthesis; ubiquinone biosynthesis. In terms of biological role, methyltransferase required for the conversion of demethylmenaquinol (DMKH2) to menaquinol (MKH2) and the conversion of 2-polyprenyl-6-methoxy-1,4-benzoquinol (DDMQH2) to 2-polyprenyl-3-methyl-6-methoxy-1,4-benzoquinol (DMQH2). The polypeptide is Ubiquinone/menaquinone biosynthesis C-methyltransferase UbiE (Rickettsia bellii (strain RML369-C)).